The primary structure comprises 127 residues: Phospholipase A2 homolog otoconin-22 (127 aa).

N-linked (GlcNAc...) asparagine glycosylation is present at Asn20. Cystine bridges form between Cys26/Cys120, Cys28/Cys44, Cys43/Cys99, Cys49/Cys127, Cys50/Cys92, Cys59/Cys85, and Cys78/Cys90. A glycan (N-linked (GlcNAc...) asparagine) is linked at Asn113.

Belongs to the phospholipase A2 family. Monomer. In terms of tissue distribution, otoconial membrane in the maculae of the saccule and utricle. Otoconia are composites of proteins and inorganic crystals formed in the peripheral portion of the vestibular system of vertebrates. The otoconial membranes contain small crystals of calcium carbonate known as otoliths (ear stones) if there is a single deposit or as otoconia (ear dust) if there are many. Each mineral polymorph of otoconia has a protein unique to that polymorph.

The protein resides in the secreted. Major protein of the aragonitic otoconia. It is unlikely that this protein has phospholipase A2 activity. This Xenopus laevis (African clawed frog) protein is Phospholipase A2 homolog otoconin-22.